The following is a 424-amino-acid chain: Vasopressin V1b receptor (424 aa).

Residues 1–22 (MDSGPLWDANPTPRGTLSAPNA) form a disordered region. Residues 1–35 (MDSGPLWDANPTPRGTLSAPNATTPWLGRDEELAK) are Extracellular-facing. Residues 13–22 (PRGTLSAPNA) show a composition bias toward polar residues. Asn-21 is a glycosylation site (N-linked (GlcNAc...) asparagine). The chain crosses the membrane as a helical span at residues 36 to 59 (VEIGVLATVLVLATGGNLAVLLTL). The Cytoplasmic portion of the chain corresponds to 60–71 (GQLGRKRSRMHL). A helical membrane pass occupies residues 72 to 93 (FVLHLALTDLAVALFQVLPQLL). At 94 to 108 (WDITYRFQGPDLLCR) the chain is on the extracellular side. A disulfide bridge links Cys-107 with Cys-186. The helical transmembrane segment at 109 to 130 (AVKYLQVLSMFASTYMLLAMTL) threads the bilayer. Topologically, residues 131–151 (DRYLAVCHPLRSLQQPGQSTY) are cytoplasmic. Residues 152-173 (LLIAAPWLLAAIFSLPQVFIFS) form a helical membrane-spanning segment. Residues 174-201 (LREVIQGSGVLDCWADFGFPWGPRAYLT) are Extracellular-facing. The helical transmembrane segment at 202–222 (WTTLAIFVLPVTMLTACYSLI) threads the bilayer. Over 223-283 (CHEICKNLKV…RAKIRTVKMT (61 aa)) the chain is Cytoplasmic. The helical transmembrane segment at 284 to 303 (FVIVLAYIACWAPFFSVQMW) threads the bilayer. At 304–321 (SVWDKNAPDEDSTNVAFT) the chain is on the extracellular side. Residues 322 to 341 (ISMLLGNLNSCCNPWIYMGF) form a helical membrane-spanning segment. The Cytoplasmic portion of the chain corresponds to 342-424 (NSHLLPRPLR…GEGTAETIIF (83 aa)). Positions 398–417 (SGRPRPEESPRDLELADGEG) are disordered. Over residues 401–411 (PRPEESPRDLE) the composition is skewed to basic and acidic residues.

The protein belongs to the G-protein coupled receptor 1 family. Vasopressin/oxytocin receptor subfamily.

The protein resides in the cell membrane. Functionally, receptor for arginine vasopressin. The activity of this receptor is mediated by G proteins which activate a phosphatidyl-inositol-calcium second messenger system. (Microbial infection) During SARS coronavirus-2/SARS-CoV-2 infection, may recognize and internalize the complex formed by AVP/Arg-vasopressin, SARS-CoV-2 spike protein and secreted ACE2 through DNM2/dynamin 2-dependent endocytosis. This Homo sapiens (Human) protein is Vasopressin V1b receptor.